The primary structure comprises 137 residues: NADH-quinone oxidoreductase subunit A (137 aa).

3 helical membrane passes run 12–32 (WAFA…LGVS), 68–88 (LVAM…AWAV), and 94–114 (GWVG…GLVY).

It belongs to the complex I subunit 3 family. NDH-1 is composed of 13 different subunits. Subunits NuoA, H, J, K, L, M, N constitute the membrane sector of the complex.

It is found in the cell inner membrane. It carries out the reaction a quinone + NADH + 5 H(+)(in) = a quinol + NAD(+) + 4 H(+)(out). Its function is as follows. NDH-1 shuttles electrons from NADH, via FMN and iron-sulfur (Fe-S) centers, to quinones in the respiratory chain. The immediate electron acceptor for the enzyme in this species is believed to be ubiquinone. Couples the redox reaction to proton translocation (for every two electrons transferred, four hydrogen ions are translocated across the cytoplasmic membrane), and thus conserves the redox energy in a proton gradient. The sequence is that of NADH-quinone oxidoreductase subunit A from Ectopseudomonas mendocina (strain ymp) (Pseudomonas mendocina).